The chain runs to 226 residues: Transmembrane protein 204 (226 aa).

The Cytoplasmic portion of the chain corresponds to 1-5 (MTVRK). A helical transmembrane segment spans residues 6-26 (VVATAVLVALVSLVLNNAAAF). At 27–103 (TPNWVYQTLE…LQFDMMRACN (77 aa)) the chain is on the extracellular side. Residues 104–124 (LVATAALAAGQLTFVLGLTGL) traverse the membrane as a helical segment. Residues 125–136 (PLLSPDAQCWEE) lie on the Cytoplasmic side of the membrane. A helical transmembrane segment spans residues 137-157 (AMAAAFQLASFVLVIGLVTFY). The Extracellular segment spans residues 158–170 (RIGPYTSLSWSCY). Residues 171–191 (LNIGACLLATLAAAMLIWNVL) traverse the membrane as a helical segment. The Cytoplasmic portion of the chain corresponds to 192 to 226 (HRREDCTAPRVIVISRSLTARFRRGLDNDYVESPC).

It localises to the cell junction. The protein localises to the adherens junction. It is found in the cell membrane. Functionally, can influence paracellular permeability. Appears to be involved in cell-cell interactions through adherens. This is Transmembrane protein 204 (TMEM204) from Bos taurus (Bovine).